The following is a 242-amino-acid chain: Carbendazim hydrolyzing esterase (242 aa).

Catalysis depends on Ser77, which acts as the Acyl-ester intermediate.

Belongs to the AB hydrolase superfamily.

Its subcellular location is the secreted. The catalysed reaction is carbendazim + H2O = 2-aminobenzimidazole + methanol + CO2. It catalyses the reaction carbendazim + H2O = N-(1H-1,3-benzodiazol-2-yl)carbamate + methanol + H(+). It carries out the reaction N-(1H-1,3-benzodiazol-2-yl)carbamate + H(+) = 2-aminobenzimidazole + CO2. Its function is as follows. Catalyzes the hydrolysis of the fungicide carbendazim (methyl-1H-benzimidazol-2-ylcarbamate or MBC) to 2-aminobenzimidazole (2-AB). Following hydrolysis of the carbamate ester, the carbamate decarboxylates spontaneously. Can hydrolyze model carboxylesters such as methyl salicylate, alpha-naphthyl acetate and p-nitrophenyl acetate. In addition, shows substantial hydrolytic activity in vitro against widespread pollutants with carboxylester, carbamate and amide linkages, such as dimethyl phthalate, propanil and chlorpropham. This Nocardioides sp. (strain SG-4G) protein is Carbendazim hydrolyzing esterase.